A 758-amino-acid chain; its full sequence is Catalase-peroxidase (758 aa).

The segment covering 1–10 has biased composition (polar residues); it reads MSDTQDNAPA. The segment at 1–59 is disordered; it reads MSDTQDNAPASAQGVDQKAAAGCPVAHDSVTAHGSESESPAIDSPTPHSGGRPRTNRDW. Residues 128 to 250 constitute a cross-link (tryptophyl-tyrosyl-methioninium (Trp-Tyr) (with M-276)); that stretch reads WHAAGTYRID…VGATEMGLIY (123 aa). Catalysis depends on His-129, which acts as the Proton acceptor. Residues 250–276 constitute a cross-link (tryptophyl-tyrosyl-methioninium (Tyr-Met) (with W-128)); the sequence is YVNPEGPRGNADPAAAAHFIRETFRRM. His-291 lines the heme b pocket.

The protein belongs to the peroxidase family. Peroxidase/catalase subfamily. In terms of assembly, homodimer or homotetramer. Heme b serves as cofactor. Post-translationally, formation of the three residue Trp-Tyr-Met cross-link is important for the catalase, but not the peroxidase activity of the enzyme.

The catalysed reaction is H2O2 + AH2 = A + 2 H2O. The enzyme catalyses 2 H2O2 = O2 + 2 H2O. Bifunctional enzyme with both catalase and broad-spectrum peroxidase activity. This Salinispora arenicola (strain CNS-205) protein is Catalase-peroxidase.